Consider the following 570-residue polypeptide: Urease subunit alpha (570 aa).

A Urease domain is found at 131–570; it reads GGFDSHIHFI…LPMAQRYFMY (440 aa). Ni(2+)-binding residues include His-136, His-138, and Lys-219. At Lys-219 the chain carries N6-carboxylysine. His-221 provides a ligand contact to substrate. Positions 248 and 274 each coordinate Ni(2+). His-322 acts as the Proton donor in catalysis. Asp-362 serves as a coordination point for Ni(2+).

This sequence belongs to the metallo-dependent hydrolases superfamily. Urease alpha subunit family. Heterotrimer of UreA (gamma), UreB (beta) and UreC (alpha) subunits. Three heterotrimers associate to form the active enzyme. Requires Ni cation as cofactor. Post-translationally, carboxylation allows a single lysine to coordinate two nickel ions.

The protein resides in the cytoplasm. It carries out the reaction urea + 2 H2O + H(+) = hydrogencarbonate + 2 NH4(+). It participates in nitrogen metabolism; urea degradation; CO(2) and NH(3) from urea (urease route): step 1/1. The polypeptide is Urease subunit alpha (Rhodopseudomonas palustris (strain HaA2)).